We begin with the raw amino-acid sequence, 239 residues long: Aspartate/glutamate leucyltransferase (239 aa).

This sequence belongs to the R-transferase family. Bpt subfamily.

It localises to the cytoplasm. The catalysed reaction is N-terminal L-glutamyl-[protein] + L-leucyl-tRNA(Leu) = N-terminal L-leucyl-L-glutamyl-[protein] + tRNA(Leu) + H(+). It catalyses the reaction N-terminal L-aspartyl-[protein] + L-leucyl-tRNA(Leu) = N-terminal L-leucyl-L-aspartyl-[protein] + tRNA(Leu) + H(+). Functionally, functions in the N-end rule pathway of protein degradation where it conjugates Leu from its aminoacyl-tRNA to the N-termini of proteins containing an N-terminal aspartate or glutamate. In Campylobacter jejuni (strain RM1221), this protein is Aspartate/glutamate leucyltransferase.